The primary structure comprises 427 residues: D-inositol 3-phosphate glycosyltransferase 2 (427 aa).

Residue His-14 participates in 1D-myo-inositol 3-phosphate binding. UDP-N-acetyl-alpha-D-glucosamine-binding positions include 20–21 (QP) and Gly-28. Residues 25–30 (DAGGMN), Lys-83, Tyr-116, Thr-140, and Arg-160 each bind 1D-myo-inositol 3-phosphate. Residues Arg-234, Lys-239, and Val-300 each coordinate UDP-N-acetyl-alpha-D-glucosamine. Mg(2+) is bound by residues Tyr-309, Arg-310, and Ala-312. Glu-322 and Glu-330 together coordinate UDP-N-acetyl-alpha-D-glucosamine. Position 336 (Thr-336) interacts with Mg(2+).

The protein belongs to the glycosyltransferase group 1 family. MshA subfamily. In terms of assembly, homodimer.

The enzyme catalyses 1D-myo-inositol 3-phosphate + UDP-N-acetyl-alpha-D-glucosamine = 1D-myo-inositol 2-acetamido-2-deoxy-alpha-D-glucopyranoside 3-phosphate + UDP + H(+). Functionally, catalyzes the transfer of a N-acetyl-glucosamine moiety to 1D-myo-inositol 3-phosphate to produce 1D-myo-inositol 2-acetamido-2-deoxy-glucopyranoside 3-phosphate in the mycothiol biosynthesis pathway. The chain is D-inositol 3-phosphate glycosyltransferase 2 from Catenulispora acidiphila (strain DSM 44928 / JCM 14897 / NBRC 102108 / NRRL B-24433 / ID139908).